The primary structure comprises 60 residues: Potassium channel toxin Tst-beta-KTx (60 aa).

The BetaSPN-type CS-alpha/beta domain maps to Gln-26–Asp-60. Disulfide bonds link Cys-29-Cys-50, Cys-36-Cys-55, and Cys-40-Cys-57.

It belongs to the long chain scorpion toxin family. Class 1 subfamily. Expressed by the venom gland.

Its subcellular location is the secreted. Its function is as follows. Inhibits voltage-gated potassium channels Kv1.1/KCNA1, Kv1.2/KCNA2, and Kv1.3/KCNA3. Does not induce hemolytic activity, lactate dehydrogenase (LDH) release from mast cells, mast cell degranulation, and antimicrobial effects. In vivo, injection into mice causes moderate edema formation, but induces very weak or no change in nociceptive sensibility. It also reduces mice locomotion, suggesting an increase in anxiety, but causes no alteration in rearing (standing on hind limbs). The protein is Potassium channel toxin Tst-beta-KTx of Tityus stigmurus (Brazilian scorpion).